The sequence spans 29 residues: U-limacoditoxin(12)-Dv72 (29 aa).

The N-terminal stretch at 1–15 (MNFGMLKLLTVLIIC) is a signal peptide. Asn27 carries the asparagine amide modification.

The protein belongs to the limacoditoxin-12 family. As to expression, expressed by the venom secretory cell of the spine. The spine is a cuticular structure containing a single large nucleated venom-secreting cell at its base. It is an independent unit capable of producing, storing and injecting venom. On the back of D.vulnerans caterpillars, spines are grouped together by 50 to 100 to form scoli, of which there are eight in D.vulnerans.

It localises to the secreted. Its function is as follows. Probable toxin. Does not show insecticidal, antimicrobial and antiparasitic activities. Does not induce increase in intracellular calcium in mouse DRG neurons, suggesting that it does not induce pain. The polypeptide is U-limacoditoxin(12)-Dv72 (Doratifera vulnerans (Mottled cup moth)).